The following is a 508-amino-acid chain: MKNTYYITTPIYYVNDVAHIGHAYTSVASDVIARFMRFCGKDVMFLTGTDEHGQKVEKAAINQNIDPQTFTDKTSQNFRDLMVAMNISNDDFIRTTENRHKKAVAVFWKKLLDNGAIYEGFYEGWYSVRDEAFYDESEINEDKLAPTGAPVEWVKEPSYFFNLAKWQDKLLEFYELNPDFVRPISRRNEVISFIKSGLKDLSISRTTFHWGIKVPNNRKHVIYVWLDALVNYISALGYPDKQSNYAKFWPANLQIVGKDILRFHAVYWPAFLMAAEIPLPKAIMVHGWWTNEGQKISKSLGNTIDPITLIDEFGVDQVRYFLMREVIFGADANFARNNLITRINSELSNKIGNLLHRIVSFVYKNNDAKVPLIKSGVIDKIYELPILKTAIKFAQENILLMDKTEINKILENIINLAEDANIYITNEAPWNLKTTDPDKMLEVLYSLLEVLRYIAIMLQPFVPNSANKMLDQLGVSKEERLFKHLVRDHALKAGSNILEPSIIFPKFN.

The 'HIGH' region motif lies at Y12–H22. Residues K295–S299 carry the 'KMSKS' region motif. K298 is an ATP binding site.

Belongs to the class-I aminoacyl-tRNA synthetase family. MetG type 2B subfamily. In terms of assembly, monomer.

Its subcellular location is the cytoplasm. The enzyme catalyses tRNA(Met) + L-methionine + ATP = L-methionyl-tRNA(Met) + AMP + diphosphate. In terms of biological role, is required not only for elongation of protein synthesis but also for the initiation of all mRNA translation through initiator tRNA(fMet) aminoacylation. The sequence is that of Methionine--tRNA ligase (metG) from Rickettsia prowazekii (strain Madrid E).